The sequence spans 909 residues: uncharacterized protein (909 aa).

This is an uncharacterized protein from Sinorhizobium fredii (strain NBRC 101917 / NGR234).